Reading from the N-terminus, the 41-residue chain is Pi-stichotoxin-Hcr5c (41 aa).

3 cysteine pairs are disulfide-bonded: cysteine 4–cysteine 37, cysteine 6–cysteine 30, and cysteine 20–cysteine 38.

The protein belongs to the sea anemone type 3 (BDS) potassium channel toxin family.

Its subcellular location is the secreted. It localises to the nematocyst. In terms of biological role, weakly and reversibly inhibits rat homomeric ASIC1 (isoform ASIC1a) (IC(50)=4.95 uM), and ASIC3 (IC(50)=17 uM). ASIC1a current inhibition and ASIC3 transient current inhibition are not complete, and reach a maximum of 70% inhibition and 80%, respectively. The polypeptide is Pi-stichotoxin-Hcr5c (Radianthus crispa (Leathery sea anemone)).